The sequence spans 362 residues: Atypical chemokine receptor 3 (362 aa).

The Extracellular segment spans residues 1 to 40; sequence MDLHLFDYAEPGNFSDISWPCNSSDCIVVDTVLCPNMPNK. Residues Asn-13, Asn-22, and Asn-39 are each glycosylated (N-linked (GlcNAc...) asparagine). Residues 41 to 61 traverse the membrane as a helical segment; the sequence is SVLLYTLSFIYIFIFVIGMIA. At 62 to 81 the chain is on the cytoplasmic side; it reads NSVVVWVNIQAKTTGYDTHC. A helical transmembrane segment spans residues 82–102; that stretch reads YILNLAIADLWVVVTIPVWVV. Over 103 to 118 the chain is Extracellular; the sequence is SLVQHNQWPMGELTCK. A disulfide bridge links Cys-117 with Cys-196. A helical membrane pass occupies residues 119–139; it reads ITHLIFSINLFGSIFFLTCMS. The Cytoplasmic segment spans residues 140 to 162; the sequence is VDRYLSITYFASTSSRRKKVVRR. A helical transmembrane segment spans residues 163–183; that stretch reads AVCVLVWLLAFCVSLPDTYYL. The Extracellular portion of the chain corresponds to 184–213; that stretch reads KTVTSASNNETYCRSFYPEHSVKEWLISME. Residues 214–234 traverse the membrane as a helical segment; it reads LVSVVLGFAIPFCVIAVFYCL. Residues 235-252 are Cytoplasmic-facing; sequence LARAISASSDQEKQSSRK. The chain crosses the membrane as a helical span at residues 253-273; that stretch reads IIFSYVVVFLVCWLPYHVVVL. The Extracellular portion of the chain corresponds to 274-296; the sequence is LDIFSILHYIPFTCQLENFLFTA. The chain crosses the membrane as a helical span at residues 297–319; the sequence is LHVTQCLSLVHCCVNPVLYSFIN. Topologically, residues 320-362 are cytoplasmic; it reads RNYRYELMKAFIFKYSAKTGLTKLIDASRVSETEYSALEQNAK. The tract at residues 324-362 is C-terminal cytoplasmic tail; that stretch reads YELMKAFIFKYSAKTGLTKLIDASRVSETEYSALEQNAK. Phosphoserine occurs at positions 347, 350, and 355.

The protein belongs to the G-protein coupled receptor 1 family. Atypical chemokine receptor subfamily. Homodimer. Can form heterodimers with CXCR4; heterodimerization may regulate CXCR4 signaling activity. Interacts with ARRB1 and ARRB2. Post-translationally, the Ser/Thr residues in the C-terminal cytoplasmic tail may be phosphorylated. Ubiquitinated at the Lys residues in its C-terminal cytoplasmic tail and is essential for correct trafficking from and to the cell membrane. Deubiquitinated by CXCL12-stimulation in a reversible manner.

It localises to the cell membrane. It is found in the early endosome. The protein localises to the recycling endosome. Atypical chemokine receptor that controls chemokine levels and localization via high-affinity chemokine binding that is uncoupled from classic ligand-driven signal transduction cascades, resulting instead in chemokine sequestration, degradation, or transcytosis. Also known as interceptor (internalizing receptor) or chemokine-scavenging receptor or chemokine decoy receptor. Acts as a receptor for chemokines CXCL11 and CXCL12/SDF1. Chemokine binding does not activate G-protein-mediated signal transduction but instead induces beta-arrestin recruitment, leading to ligand internalization and activation of MAPK signaling pathway. Required for regulation of CXCR4 protein levels in migrating interneurons, thereby adapting their chemokine responsiveness. In glioma cells, transduces signals via MEK/ERK pathway, mediating resistance to apoptosis. Promotes cell growth and survival. Not involved in cell migration, adhesion or proliferation of normal hematopoietic progenitors but activated by CXCL11 in malignant hemapoietic cells, leading to phosphorylation of ERK1/2 (MAPK3/MAPK1) and enhanced cell adhesion and migration. Plays a regulatory role in CXCR4-mediated activation of cell surface integrins by CXCL12. Required for heart valve development. Regulates axon guidance in the oculomotor system through the regulation of CXCL12 levels. The chain is Atypical chemokine receptor 3 (ACKR3) from Canis lupus familiaris (Dog).